Here is a 514-residue protein sequence, read N- to C-terminus: MTLLPGDNSHYDYSALSCASDTSFHPAFFPQRQAIKGVFYRRAQRLRPQDDLHQSCSLGDRRRQIIINVGGIKYSLPWTTLDEFPLTRLGQLKACTNFDDILSVCDDYDVTCNEFFFDRNPGAFGTILTFLRAGKLRLLREMCALSFQEELLYWGIAEDHLDGCCKRRYLQKIEEFAEMMEREEEEEPLDSEDQESEGPSASEGRLSRCMRRLRDMVERPHSGLPGKVFACLSVLFVTVTAVNLSVSTLPSLREEEEQGQCSQMCHNVFIVESVCVGWFSLEFLLRFIQAPSKFAFLRSPLTLIDLVAILPYYVTLLVDGAASSRRKPSTGNSYLDKVGLVLRVLRALRILYVMRLARHSLGLQTLGLTARRCTREFGLLLLFLCVAIALFAPLLYVIENEMADSPEFTSIPACYWWAVITMTTVGYGDMVPRSTPGQVVALSSILSGILLMAFPVTSIFHTFSRSYLELKQEQERVLIRRAQYLIKTKSQLSGMSQDSDILFGSASSDTRDNN.

At methionine 1–leucine 224 the chain is on the cytoplasmic side. A compositionally biased stretch (acidic residues) spans methionine 180 to serine 196. Positions methionine 180–arginine 205 are disordered. Residues proline 225–valine 246 form a helical membrane-spanning segment. The Extracellular segment spans residues serine 247–asparagine 267. A helical transmembrane segment spans residues valine 268–glutamine 289. The Cytoplasmic portion of the chain corresponds to alanine 290 to proline 300. Residues leucine 301–alanine 321 traverse the membrane as a helical segment. Residues alanine 322 to valine 338 lie on the Extracellular side of the membrane. A helical; Voltage-sensor transmembrane segment spans residues glycine 339–histidine 359. Over serine 360–threonine 374 the chain is Cytoplasmic. A helical membrane pass occupies residues arginine 375–tyrosine 396. Residues valine 397 to isoleucine 411 lie on the Extracellular side of the membrane. The segment at residues proline 412–threonine 423 is an intramembrane region (helical). A Selectivity filter motif is present at residues threonine 424–aspartate 429. An intramembrane segment occupies threonine 424 to valine 431. Residues proline 432–glutamine 438 are Extracellular-facing. The chain crosses the membrane as a helical span at residues valine 439–tyrosine 467. The Cytoplasmic portion of the chain corresponds to leucine 468–asparagine 514.

It belongs to the potassium channel family. G (TC 1.A.1.2) subfamily. Kv6.1/KCNG1 sub-subfamily. In terms of assembly, heterotetramer with KCNB1 or KCNB2.

It localises to the cell membrane. Regulatory alpha-subunit of the voltage-gated potassium (Kv) channel which, when coassembled with KCNB1 or KCNB2, can modulate their expression and their gating kinetics by acting on deactivation upon repolarization and inactivation during maintained depolarization. Potassium channel subunit that does not form functional channels by itself. This Mus musculus (Mouse) protein is Voltage-gated potassium channel regulatory subunit KCNG1.